A 393-amino-acid chain; its full sequence is uncharacterized protein (393 aa).

Disordered stretches follow at residues 77–118 (DSNN…SIRP) and 259–296 (INNN…DESN). Low complexity predominate over residues 79–92 (NNNNNNNNNNNNNN). The segment covering 103–114 (IRQSLSSPQQLV) has biased composition (polar residues). Over residues 259 to 289 (INNNNNNNNNNSNNNNNNNNSNNNDNNNNIN) the composition is skewed to low complexity.

This is an uncharacterized protein from Dictyostelium discoideum (Social amoeba).